We begin with the raw amino-acid sequence, 117 residues long: uncharacterized protein (117 aa).

Transmembrane regions (helical) follow at residues 3-23 (AVPI…NILL), 40-60 (FLTP…LLFA), 66-86 (LEVS…LIIA), and 94-114 (PFHL…IFLA).

The protein to E.coli and S.aureus ethidium bromide resistance proteins (ebr/QacC/EmrE/MvrC).

Its subcellular location is the cell membrane. This is an uncharacterized protein from Sinorhizobium fredii (strain NBRC 101917 / NGR234).